The sequence spans 330 residues: MGNLVDNKFTWVIQNFSSSQSRVVPSNQFVIGGCKWRLLVYPEGFNKSGDHLSLFLEVADPRSLPPGWSRHARYLLTIVNQHSDKISKRNEATKWFNQKIPGWGLSAMIPLTKLHAKDGGFLVNDELKIVAEVNVLEVIGKLDVPEESEEETQVTQPMKKVKVDYDHVESNDLMINETPPVSELMDVNGFQVLPSQVDFVKRIFEKHPDIAKDFRPKNPHLRKACMNFLLSLMETLCQPPQKLSNEDLVEADNALTYVKVSGFKVDWLEKKLEEVKKKKEEEQTGEARIQELEEELKEFKQKCLDREAMLEKEKAKVLTARAPLTLDDVI.

The MATH domain maps to Asp6 to Val133. Residues Phe263–Lys314 adopt a coiled-coil conformation.

The sequence is that of MATH domain and coiled-coil domain-containing protein At3g58210 from Arabidopsis thaliana (Mouse-ear cress).